The chain runs to 127 residues: Small ribosomal subunit protein uS13 (127 aa).

Positions 93-127 are disordered; it reads RRSLPVRGQRTHTNARTRKGPRRGTVAGKKKATKT.

It belongs to the universal ribosomal protein uS13 family. As to quaternary structure, part of the 30S ribosomal subunit. Forms a loose heterodimer with protein S19. Forms two bridges to the 50S subunit in the 70S ribosome.

Functionally, located at the top of the head of the 30S subunit, it contacts several helices of the 16S rRNA. In the 70S ribosome it contacts the 23S rRNA (bridge B1a) and protein L5 of the 50S subunit (bridge B1b), connecting the 2 subunits; these bridges are implicated in subunit movement. Contacts the tRNAs in the A and P-sites. The protein is Small ribosomal subunit protein uS13 of Acidobacterium capsulatum (strain ATCC 51196 / DSM 11244 / BCRC 80197 / JCM 7670 / NBRC 15755 / NCIMB 13165 / 161).